Consider the following 363-residue polypeptide: Ribosomal RNA small subunit methyltransferase H (363 aa).

Residues G55–H57, D75, D122, and Q129 contribute to the S-adenosyl-L-methionine site.

This sequence belongs to the methyltransferase superfamily. RsmH family.

It is found in the cytoplasm. It carries out the reaction cytidine(1402) in 16S rRNA + S-adenosyl-L-methionine = N(4)-methylcytidine(1402) in 16S rRNA + S-adenosyl-L-homocysteine + H(+). Functionally, specifically methylates the N4 position of cytidine in position 1402 (C1402) of 16S rRNA. The sequence is that of Ribosomal RNA small subunit methyltransferase H from Bordetella petrii (strain ATCC BAA-461 / DSM 12804 / CCUG 43448).